The following is a 423-amino-acid chain: D-tagatose-1,6-bisphosphate aldolase subunit GatZ (423 aa).

The protein belongs to the GatZ/KbaZ family. GatZ subfamily. Forms a complex with GatY.

The protein operates within carbohydrate metabolism; D-tagatose 6-phosphate degradation; D-glyceraldehyde 3-phosphate and glycerone phosphate from D-tagatose 6-phosphate: step 2/2. Its function is as follows. Component of the tagatose-1,6-bisphosphate aldolase GatYZ that is required for full activity and stability of the Y subunit. Could have a chaperone-like function for the proper and stable folding of GatY. When expressed alone, GatZ does not show any aldolase activity. Is involved in the catabolism of galactitol. The chain is D-tagatose-1,6-bisphosphate aldolase subunit GatZ from Salmonella gallinarum (strain 287/91 / NCTC 13346).